Here is a 180-residue protein sequence, read N- to C-terminus: ATP-dependent protease subunit HslV (180 aa).

Threonine 7 is an active-site residue. Residues glycine 165, cysteine 168, and threonine 171 each coordinate Na(+).

The protein belongs to the peptidase T1B family. HslV subfamily. As to quaternary structure, a double ring-shaped homohexamer of HslV is capped on each side by a ring-shaped HslU homohexamer. The assembly of the HslU/HslV complex is dependent on binding of ATP.

The protein resides in the cytoplasm. The catalysed reaction is ATP-dependent cleavage of peptide bonds with broad specificity.. Its activity is regulated as follows. Allosterically activated by HslU binding. Its function is as follows. Protease subunit of a proteasome-like degradation complex believed to be a general protein degrading machinery. This Bacillus anthracis (strain A0248) protein is ATP-dependent protease subunit HslV.